A 30-amino-acid polypeptide reads, in one-letter code: Cycloviolacin-O9 (30 aa).

A cross-link (cyclopeptide (Gly-Asn)) is located at residues 1–30 (GIPCGESCVWIPCLTSAVGCSCKSKVCYRN). Disulfide bonds link C4–C20, C8–C22, and C13–C27.

Post-translationally, this is a cyclic peptide.

In terms of biological role, probably participates in a plant defense mechanism. The sequence is that of Cycloviolacin-O9 from Viola odorata (Sweet violet).